The primary structure comprises 656 residues: Receptor-type tyrosine-protein phosphatase R (656 aa).

The first 23 residues, 1 to 23 (MRRAVGFPALCLLLNLHAAGCFS), serve as a signal peptide directing secretion. An O-linked (Xyl...) (chondroitin sulfate) serine glycan is attached at serine 23. The Extracellular portion of the chain corresponds to 24 to 226 (RNNDHFLAIR…EADKIWSKEG (203 aa)). The N-linked (GlcNAc...) asparagine glycan is linked to asparagine 128. A helical membrane pass occupies residues 227-247 (FYAVVIFLSIFIIIVTCLMII). Residues 248-656 (YRLKERLQLS…ESRLSPETVE (409 aa)) are Cytoplasmic-facing. The tract at residues 269–289 (HLSPIARQQAQSEAKTTHSMV) is disordered. Serine 271 is modified (phosphoserine). Over residues 274 to 289 (ARQQAQSEAKTTHSMV) the composition is skewed to polar residues. A Phosphoserine; by PKA modification is found at serine 338. The Tyrosine-protein phosphatase domain occupies 392 to 646 (LQSEFMEIPM…EFVHHALCLF (255 aa)). Substrate is bound by residues aspartate 553, 587 to 593 (CSAGIGR), and glutamine 631. Cysteine 587 functions as the Phosphocysteine intermediate in the catalytic mechanism.

The protein belongs to the protein-tyrosine phosphatase family. Receptor class 7 subfamily. Interacts with MAPKs. In terms of tissue distribution, expressed in the heart, brain, spleen, lung, liver, skeletal muscle, kidney and testis. Isoform alpha is expressed throughout the granular layer of the cerebellar but not within the Purkinje cells, also in the villi of the ileum and jejunum and both the villi and crypts of the duodenum. Isoform beta is expressed only in the Purkinje cells. Isoform gamma is expressed throughout the brain, the villi and crypts of the duodenum, jejunum and ileum and expressed at low levels in the proximal colon.

The protein resides in the cell membrane. It is found in the cytoplasm. The catalysed reaction is O-phospho-L-tyrosyl-[protein] + H2O = L-tyrosyl-[protein] + phosphate. Its function is as follows. Sequesters mitogen-activated protein kinases (MAPKs) such as MAPK1, MAPK3 and MAPK14 in the cytoplasm in an inactive form. The MAPKs bind to a dephosphorylated kinase interacting motif, phosphorylation of which by the protein kinase A complex releases the MAPKs for activation and translocation into the nucleus. Isoform gamma may have a role in patterning and cellular proliferation of skeletal elements in the precartilaginous/cartilaginous skeleton. In Mus musculus (Mouse), this protein is Receptor-type tyrosine-protein phosphatase R (Ptprr).